We begin with the raw amino-acid sequence, 346 residues long: Uricase (346 aa).

The tract at residues Met-1–Gly-23 is disordered. Catalysis depends on charge relay system residues Lys-39 and Thr-84. 7 residues coordinate urate: Thr-84, Asp-85, Phe-208, Arg-225, Val-273, Gln-274, and Asn-300. Catalysis depends on His-302, which acts as the Charge relay system. A Microbody targeting signal motif is present at residues Ser-344 to Leu-346.

This sequence belongs to the uricase family. Malpighian tubules.

It is found in the peroxisome. It carries out the reaction urate + O2 + H2O = 5-hydroxyisourate + H2O2. The protein operates within purine metabolism; urate degradation; (S)-allantoin from urate: step 1/3. With respect to regulation, repressed by 20-hydroxyecdysone. In terms of biological role, catalyzes the oxidation of uric acid to 5-hydroxyisourate, which is further processed to form (S)-allantoin. The sequence is that of Uricase (Uro) from Drosophila pseudoobscura pseudoobscura (Fruit fly).